The chain runs to 157 residues: Small ribosomal subunit protein uS7 (157 aa).

The protein belongs to the universal ribosomal protein uS7 family. In terms of assembly, part of the 30S ribosomal subunit. Contacts proteins S9 and S11.

In terms of biological role, one of the primary rRNA binding proteins, it binds directly to 16S rRNA where it nucleates assembly of the head domain of the 30S subunit. Is located at the subunit interface close to the decoding center, probably blocks exit of the E-site tRNA. This chain is Small ribosomal subunit protein uS7, found in Koribacter versatilis (strain Ellin345).